We begin with the raw amino-acid sequence, 648 residues long: Sodium/nucleoside cotransporter 1 (648 aa).

Residues 1 to 83 (MADDTPRQRE…LCREHWQLFE (83 aa)) are Cytoplasmic-facing. Residues 84–104 (WISKGLLSTAYIGFLIVACLL) traverse the membrane as a helical segment. At 105 to 108 (DFPR) the chain is on the extracellular side. Residues 109-129 (ALALFVITCVVLVFLAYNLLK) form a helical membrane-spanning segment. Residues 130 to 147 (RLLGSKLKKCVKFQGHSC) lie on the Cytoplasmic side of the membrane. A helical membrane pass occupies residues 148-168 (LSLWLKRGLALAAGLGVILWL). Over 169-175 (SLDTAQR) the chain is Extracellular. A helical transmembrane segment spans residues 176–196 (PEQLVSFAGICVFLVLLFAGS). Over 197–201 (KHHRA) the chain is Cytoplasmic. The helical transmembrane segment at 202 to 222 (VSWRAVSWGLGLQFVLGLFVI) threads the bilayer. Over 223–265 (RTEPGFVAFQWLGDQIRVFLSYTEAGSSFVFGEALVKDVFAFQ) the chain is Extracellular. Residues 266-286 (VLPIIVFFSCVMSVLYYLGLM) form a helical membrane-spanning segment. Over 287-294 (QWVILKIA) the chain is Cytoplasmic. The helical transmembrane segment at 295 to 318 (WLMQVTMGTSATETLSVAGNIFVS) threads the bilayer. At 319–339 (QTEAPLLIRPYLADMTLSEVH) the chain is on the extracellular side. A helical transmembrane segment spans residues 340–360 (VVMTGGYATIAGSLLGAYISF). Position 361 (Gly-361) is a topological domain, cytoplasmic. A helical membrane pass occupies residues 362-380 (IDASSLIAASVMAAPCALA). Residues 381–427 (LSKLVYPEVEESKFRSEEGVKLTYGDAQNLVEAASAGAAISVKVVAN) are Extracellular-facing. The chain crosses the membrane as a helical span at residues 428–448 (IAANLIAFLAVLAFINAALSW). At 449–470 (LGDMVDIQGLSFQLICSYVLRP) the chain is on the cytoplasmic side. A helical membrane pass occupies residues 471–491 (VAFLMGVAWEDCPVVAELLGI). Over 492–531 (KLFLNEFVAYQELSQYKQRRLAGAEEWLGDKKQWISVRAE) the chain is Extracellular. Residues 532–552 (ILTTYALCGFANFSSIGIMLG) traverse the membrane as a helical segment. At 553 to 571 (GLTSMVPQRRSDFSQIVLR) the chain is on the cytoplasmic side. Residues 572 to 592 (ALITGAFVSLVNACVAGILYV) form a helical membrane-spanning segment. Residues 593–648 (PRGVEVDCMSLLNQTVSSSSFEVYLCCRQVFQNTSLEFGQEALHNCCRFYNHTVCT) lie on the Extracellular side of the membrane. N-linked (GlcNAc...) asparagine glycosylation is found at Asn-605, Asn-625, and Asn-643.

The protein belongs to the concentrative nucleoside transporter (CNT) (TC 2.A.41) family. Post-translationally, N-glycosylated. N-glycosylation is required for localization to the plasma membrane and the transporter activity.

Its subcellular location is the cell membrane. The protein resides in the apical cell membrane. It catalyses the reaction uridine(out) + Na(+)(out) = uridine(in) + Na(+)(in). The catalysed reaction is thymidine(out) + Na(+)(out) = thymidine(in) + Na(+)(in). It carries out the reaction cytidine(out) + Na(+)(out) = cytidine(in) + Na(+)(in). The enzyme catalyses adenosine(out) + Na(+)(out) = adenosine(in) + Na(+)(in). Due to its high apparent affinity but slow transport, adenosine could act as a negative regulator of pyrimidine transport under some conditions. Functionally, sodium and pyrimidine nucleoside symporter of the plasma membrane that imports uridine, thymidine and cytidine into cells by coupling their transport to the transmembrane sodium electrochemical gradient. Also transports adenosine, an atypical substrate transported with high apparent affinity, but low maximum velocity. Therefore, exhibits the transport characteristics of the nucleoside transport system cit or N2 subtype (N2/cit). Involved in renal nucleoside (re)absorption. This is Sodium/nucleoside cotransporter 1 from Mus musculus (Mouse).